Consider the following 191-residue polypeptide: Guanylate kinase (191 aa).

A Guanylate kinase-like domain is found at 9–187; that stretch reads GQLIVITGPS…SLIALETAIF (179 aa). 16-23 lines the ATP pocket; it reads GPSGVGKG.

Belongs to the guanylate kinase family.

The protein resides in the cytoplasm. It catalyses the reaction GMP + ATP = GDP + ADP. Functionally, essential for recycling GMP and indirectly, cGMP. The chain is Guanylate kinase from Thermosynechococcus vestitus (strain NIES-2133 / IAM M-273 / BP-1).